A 239-amino-acid chain; its full sequence is Putative ABC transporter ATP-binding protein AlbC (239 aa).

Residues 4 to 238 (LDIHDVSVWY…RREFFEVIGH (235 aa)) form the ABC transporter domain. 37 to 44 (GVNGAGKT) is an ATP binding site.

This sequence belongs to the ABC transporter superfamily.

Involved in the production of the bacteriocin subtilosin. Required for immunity to subtilosin. The sequence is that of Putative ABC transporter ATP-binding protein AlbC (albC) from Bacillus subtilis (strain 168).